The following is a 427-amino-acid chain: 11-beta-hydroxysteroid dehydrogenase type 2 (427 aa).

82-111 (TRAVLITGCDSGFGNATAKKLDAMGFTVLA) contributes to the NAD(+) binding site. Substrate is bound at residue Ser219. Tyr232 acts as the Proton acceptor in catalysis.

Belongs to the short-chain dehydrogenases/reductases (SDR) family. In terms of assembly, interacts with ligand-free cytoplasmic NR3C2. Highly expressed in the kidney and adrenal and at lower levels in the colon.

The protein localises to the microsome. Its subcellular location is the endoplasmic reticulum. It carries out the reaction an 11beta-hydroxysteroid + NAD(+) = an 11-oxosteroid + NADH + H(+). The enzyme catalyses corticosterone + NAD(+) = 11-dehydrocorticosterone + NADH + H(+). The catalysed reaction is cortisol + NAD(+) = cortisone + NADH + H(+). It catalyses the reaction 11beta,17beta-dihydroxyandrost-4-ene-3-one + NAD(+) = 17beta-hydroxyandrost-4-ene-3,11-dione + NADH + H(+). It carries out the reaction 11beta-hydroxyandrost-4-ene-3,17-dione + NAD(+) = androst-4-ene-3,11,17-trione + NADH + H(+). It participates in steroid metabolism. Inhibited by glycyrrhetinic acid, carbenoloxone, 11-alpha-OH-progesterone and 11-beta-OH-progesterone. In terms of biological role, catalyzes the conversion of biologically active 11beta-hydroxyglucocorticoids (11beta-hydroxysteroid) such as cortisol, to inactive 11-ketoglucocorticoids (11-oxosteroid) such as cortisone, in the presence of NAD(+). Functions as a dehydrogenase (oxidase), thereby decreasing the concentration of active glucocorticoids, thus protecting the nonselective mineralocorticoid receptor from occupation by glucocorticoids. Plays an important role in maintaining glucocorticoids balance during preimplantation and protects the fetus from excessive maternal corticosterone exposure. Catalyzes the oxidation of 11beta-hydroxytestosterone (11beta,17beta-dihydroxyandrost-4-ene-3-one) to 11-ketotestosterone (17beta-hydroxyandrost-4-ene-3,11-dione), a major bioactive androgen. Catalyzes the conversion of 11beta-hydroxyandrostenedione (11beta-hydroxyandrost-4-ene-3,17-dione) to 11-ketoandrostenedione (androst-4-ene-3,11,17-trione), which can be further metabolized to 11-ketotestosterone. Converts 7-beta-25-dihydroxycholesterol to 7-oxo-25-hydroxycholesterol in vitro. 7-beta-25-dihydroxycholesterol (not 7-oxo-25-hydroxycholesterol) acts as a ligand for the G-protein-coupled receptor (GPCR) Epstein-Barr virus-induced gene 2 (EBI2) and may thereby regulate immune cell migration. May protect ovulating oocytes and fertilizing spermatozoa from the adverse effects of cortisol. This Ovis aries (Sheep) protein is 11-beta-hydroxysteroid dehydrogenase type 2 (HSD11B2).